Reading from the N-terminus, the 1478-residue chain is Adhesion G protein-coupled receptor L2 (1478 aa).

The first 25 residues, methionine 1–glycine 25, serve as a signal peptide directing secretion. Over phenylalanine 26–threonine 855 the chain is Extracellular. One can recognise an SUEL-type lectin domain in the interval serine 41–valine 130. The N-linked (GlcNAc...) asparagine glycan is linked to asparagine 99. The Olfactomedin-like domain maps to valine 139–proline 398. A disulfide bond links cysteine 140 and cysteine 322. The N-linked (GlcNAc...) asparagine glycan is linked to asparagine 335. The segment at valine 422–lysine 458 is disordered. A compositionally biased stretch (polar residues) spans glutamine 430–serine 445. Residues asparagine 524, asparagine 633, asparagine 735, asparagine 748, asparagine 791, asparagine 796, and asparagine 817 are each glycosylated (N-linked (GlcNAc...) asparagine). The GAIN-B domain occupies threonine 663–alanine 841. Disulfide bonds link cysteine 792–cysteine 823 and cysteine 811–cysteine 825. The interval cysteine 792–alanine 841 is GPS. A helical membrane pass occupies residues tryptophan 856–phenylalanine 876. Residues arginine 877–asparagine 884 are Cytoplasmic-facing. The helical transmembrane segment at threonine 885–isoleucine 905 threads the bilayer. The Extracellular segment spans residues aspartate 906–methionine 911. A helical membrane pass occupies residues isoleucine 912 to methionine 932. The Cytoplasmic portion of the chain corresponds to cysteine 933 to lysine 955. Residues tyrosine 956–aspartate 976 traverse the membrane as a helical segment. At tyrosine 977 to phenylalanine 994 the chain is on the extracellular side. A helical membrane pass occupies residues isoleucine 995 to isoleucine 1015. The Cytoplasmic portion of the chain corresponds to threonine 1016–valine 1056. The chain crosses the membrane as a helical span at residues leucine 1057–isoleucine 1077. Residues asparagine 1078–threonine 1081 are Extracellular-facing. The helical transmembrane segment at isoleucine 1082–phenylalanine 1102 threads the bilayer. Topologically, residues histidine 1103–leucine 1478 are cytoplasmic. Positions alanine 1378–serine 1419 are disordered. Polar residues predominate over residues glutamine 1383–proline 1395. Phosphoserine is present on residues serine 1393, serine 1428, and serine 1449.

The protein belongs to the G-protein coupled receptor 2 family. Adhesion G-protein coupled receptor (ADGR) subfamily. As to quaternary structure, heterodimer of 2 chains generated by proteolytic processing; the large extracellular N-terminal fragment and the membrane-bound C-terminal fragment predominantly remain associated and non-covalently linked. In terms of processing, autoproteolytically processed at the GPS region of the GAIN-B domain; this cleavage modulates receptor activity. In terms of tissue distribution, ubiquitously expressed.

It is found in the postsynaptic cell membrane. Forms a heterodimer of 2 chains generated by proteolytic processing that remain associated through non-covalent interactions mediated by the GAIN-B domain. In the inactivated receptor, the Stachel sequence (also named stalk) is embedded in the GAIN-B domain, where it adopts a beta-strand conformation. On activation, the Stachel moves into the 7 transmembrane region and adopts a twisted hook-shaped configuration that forms contacts within the receptor, leading to coupling of a G-alpha protein, which activates signaling. The cleaved GAIN-B and N-terminal domains can then dissociate from the rest of the receptor. Its function is as follows. Orphan adhesion G-protein coupled receptor (aGPCR), which mediates synapse specificity. Ligand binding causes a conformation change that triggers signaling via guanine nucleotide-binding proteins (G proteins) and modulates the activity of downstream effectors. Following G-protein coupled receptor activation, associates with cell adhesion molecules that are expressed at the surface of adjacent cells to direct synapse specificity. Specifically mediates the establishment of perforant-path synapses on CA1-region pyramidal neurons in the hippocampus. Localizes to postsynaptic spines in excitatory synapses in the S.lacunosum-moleculare and interacts with presynaptic cell adhesion molecules, such as teneurins, promoting synapse formation. The polypeptide is Adhesion G protein-coupled receptor L2 (ADGRL2) (Bos taurus (Bovine)).